The sequence spans 317 residues: MEHEKAIKEILGIDDRIRLYAIEKYEKKKKTFYRFTGWDTYKKKMVKVHIPRKLEKEIFSLWKEHQKEKQQLKALEQEVKALLEKYKDAEKIKEVLERIAQESITKTASSHALKTYTDKAKELFKKFEKDLINLYKEGVLKRLTILQVLYLLANLKEMSEEQKNPQFLFKKGISTIIKVAKNERIPNPFGTLKNDFFLSGTQTPYDFLLSSFLEEVLEETLRELLEKEIEKIEAERRAKEYEEKMEKIKEIVEWFESLPHKIKQTAKEVISQNTVEVAEKILKDMEDGNFSLKEVQDYLEKSTRENLVDYFRYLKNL.

To A.aeolicus AA11 and AA34.

This is an uncharacterized protein from Aquifex aeolicus (strain VF5).